Here is a 31-residue protein sequence, read N- to C-terminus: MLTLTSYFGFLLAALTITPALFIGLNKIRLI.

The helical transmembrane segment at 4 to 24 threads the bilayer; the sequence is LTSYFGFLLAALTITPALFIG.

It belongs to the PetL family. The 4 large subunits of the cytochrome b6-f complex are cytochrome b6, subunit IV (17 kDa polypeptide, PetD), cytochrome f and the Rieske protein, while the 4 small subunits are PetG, PetL, PetM and PetN. The complex functions as a dimer.

It localises to the plastid. The protein localises to the chloroplast thylakoid membrane. Functionally, component of the cytochrome b6-f complex, which mediates electron transfer between photosystem II (PSII) and photosystem I (PSI), cyclic electron flow around PSI, and state transitions. PetL is important for photoautotrophic growth as well as for electron transfer efficiency and stability of the cytochrome b6-f complex. This is Cytochrome b6-f complex subunit 6 from Agrostis stolonifera (Creeping bentgrass).